Reading from the N-terminus, the 100-residue chain is Small ribosomal subunit protein bS18c (100 aa).

The protein belongs to the bacterial ribosomal protein bS18 family. As to quaternary structure, part of the 30S ribosomal subunit.

It is found in the plastid. It localises to the chloroplast. The protein is Small ribosomal subunit protein bS18c of Pleurastrum terricola (Filamentous green alga).